Reading from the N-terminus, the 498-residue chain is Probable lysophospholipase BODYGUARD 3 (498 aa).

A signal peptide spans M1–Y55. C56 is lipidated: N-palmitoyl cysteine. An AB hydrolase-1 domain is found at V220–P326. H224 is a catalytic residue. S297 acts as the Nucleophile in catalysis. Catalysis depends on charge relay system residues D446 and H474.

It localises to the cell membrane. The protein resides in the secreted. The protein localises to the cell wall. Functionally, involved in cuticle development and morphogenesis. The protein is Probable lysophospholipase BODYGUARD 3 of Arabidopsis thaliana (Mouse-ear cress).